Here is a 133-residue protein sequence, read N- to C-terminus: ATP synthase epsilon chain, chloroplastic (133 aa).

This sequence belongs to the ATPase epsilon chain family. As to quaternary structure, F-type ATPases have 2 components, CF(1) - the catalytic core - and CF(0) - the membrane proton channel. CF(1) has five subunits: alpha(3), beta(3), gamma(1), delta(1), epsilon(1). CF(0) has three main subunits: a, b and c.

The protein resides in the plastid. Its subcellular location is the chloroplast thylakoid membrane. Functionally, produces ATP from ADP in the presence of a proton gradient across the membrane. This Lactuca sativa (Garden lettuce) protein is ATP synthase epsilon chain, chloroplastic.